The primary structure comprises 153 residues: MGLTSQLLPPLFFLLACAGNFAHGHNCHIALREIIETLNSLTEQKTLCTKLTITDILAASKNTTEKETFCRAATVLRQFYSHHEKDTRCLGATAQQFHRHKQLIRFLKRLDRNLWGLAGLNSCPVKEANQSTLEDFLERLKTIMREKYSKCSS.

The first 24 residues, 1-24, serve as a signal peptide directing secretion; the sequence is MGLTSQLLPPLFFLLACAGNFAHG. Disulfide bonds link C27–C151, C48–C89, and C70–C123. N62 carries an N-linked (GlcNAc...) asparagine glycan. The N-linked (GlcNAc...) asparagine glycan is linked to N129.

Belongs to the IL-4/IL-13 family.

The protein localises to the secreted. Functionally, participates in at least several B-cell activation processes as well as of other cell types. It is a costimulator of DNA-synthesis. It induces the expression of class II MHC molecules on resting B-cells. It enhances both secretion and cell surface expression of IgE and IgG1. It also regulates the expression of the low affinity Fc receptor for IgE (CD23) on both lymphocytes and monocytes. Positively regulates IL31RA expression in macrophages. Stimulates autophagy in dendritic cells by interfering with mTORC1 signaling and through the induction of RUFY4. The chain is Interleukin-4 (IL4) from Macaca mulatta (Rhesus macaque).